The following is a 525-amino-acid chain: Bifunctional purine biosynthesis protein PurH (525 aa).

One can recognise an MGS-like domain in the interval 1 to 149 (MSDPVIKRAL…KNNESVTVVT (149 aa)).

It belongs to the PurH family.

The enzyme catalyses (6R)-10-formyltetrahydrofolate + 5-amino-1-(5-phospho-beta-D-ribosyl)imidazole-4-carboxamide = 5-formamido-1-(5-phospho-D-ribosyl)imidazole-4-carboxamide + (6S)-5,6,7,8-tetrahydrofolate. The catalysed reaction is IMP + H2O = 5-formamido-1-(5-phospho-D-ribosyl)imidazole-4-carboxamide. It participates in purine metabolism; IMP biosynthesis via de novo pathway; 5-formamido-1-(5-phospho-D-ribosyl)imidazole-4-carboxamide from 5-amino-1-(5-phospho-D-ribosyl)imidazole-4-carboxamide (10-formyl THF route): step 1/1. Its pathway is purine metabolism; IMP biosynthesis via de novo pathway; IMP from 5-formamido-1-(5-phospho-D-ribosyl)imidazole-4-carboxamide: step 1/1. This Prosthecochloris aestuarii (strain DSM 271 / SK 413) protein is Bifunctional purine biosynthesis protein PurH.